Reading from the N-terminus, the 316-residue chain is Neuroguidin-B (316 aa).

Disordered regions lie at residues 124-169 and 292-316; these read ENDP…SKVK and VPFM…RRRH. The segment covering 145-156 has biased composition (acidic residues); that stretch reads DERESDSGEEGA. The span at 296–316 shows a compositional bias: basic residues; that stretch reads KKSKKGPKKSKKKKGFSRRRH.

It belongs to the SAS10 family. As to quaternary structure, part of the small subunit (SSU) processome, composed of more than 70 proteins and the RNA chaperone small nucleolar RNA (snoRNA) U3.

The protein localises to the nucleus. Its subcellular location is the nucleolus. The protein resides in the chromosome. It localises to the centromere. It is found in the cytoplasm. The protein localises to the cell projection. Its subcellular location is the axon. The protein resides in the dendrite. It localises to the filopodium. Part of the small subunit (SSU) processome, first precursor of the small eukaryotic ribosomal subunit. During the assembly of the SSU processome in the nucleolus, many ribosome biogenesis factors, an RNA chaperone and ribosomal proteins associate with the nascent pre-rRNA and work in concert to generate RNA folding, modifications, rearrangements and cleavage as well as targeted degradation of pre-ribosomal RNA by the RNA exosome. Its dissociation from the complex determines the transition from state pre-A1 to state pre-A1*. May inhibit mRNA translation. This Xenopus laevis (African clawed frog) protein is Neuroguidin-B (ngdn-b).